Reading from the N-terminus, the 304-residue chain is MLPKVLFLMGPTASGKTALALELAENHNCEIISVDSALIYRGMDIGSAKPSMEELARGPHRLIDIRDPSESYSAADFRADALAEIAQIIRMGKTPLLVGGTMMYFKALLEGLSPLPSADDAIRADIQAEADVKGWETLHDQLRDIDPVSAERIHPNDPQRLSRALEVYRISGKSLTELTQTKSAPLPYDVVQFAIAPRERKVLHDLIAQRFRIMLQQGFIDEVTQLKARGDLHLDLPSMRCVGYRQCWQHLDGEFDYDTMVEKAVAATRQLAKRQLTWLRSWPELNWLESGAEGNLVTLMRHCR.

Position 10–17 (10–17 (GPTASGKT)) interacts with ATP. 12-17 (TASGKT) provides a ligand contact to substrate. Interaction with substrate tRNA regions lie at residues 35–38 (DSAL), 159–163 (QRLSR), and 240–245 (RCVGYR).

Belongs to the IPP transferase family. In terms of assembly, monomer. Requires Mg(2+) as cofactor.

The enzyme catalyses adenosine(37) in tRNA + dimethylallyl diphosphate = N(6)-dimethylallyladenosine(37) in tRNA + diphosphate. Functionally, catalyzes the transfer of a dimethylallyl group onto the adenine at position 37 in tRNAs that read codons beginning with uridine, leading to the formation of N6-(dimethylallyl)adenosine (i(6)A). This Shewanella putrefaciens (strain CN-32 / ATCC BAA-453) protein is tRNA dimethylallyltransferase.